Here is a 731-residue protein sequence, read N- to C-terminus: Inducible ornithine decarboxylase (731 aa).

Lys-356 carries the post-translational modification N6-(pyridoxal phosphate)lysine.

Belongs to the Orn/Lys/Arg decarboxylase class-I family. Dodecamer. Pyridoxal 5'-phosphate is required as a cofactor.

It carries out the reaction L-ornithine + H(+) = putrescine + CO2. The sequence is that of Inducible ornithine decarboxylase (odcI) from Lactobacillus sp. (strain 30a).